A 358-amino-acid polypeptide reads, in one-letter code: Alanine racemase (358 aa).

The Proton acceptor; specific for D-alanine role is filled by lysine 34. The residue at position 34 (lysine 34) is an N6-(pyridoxal phosphate)lysine. Arginine 130 provides a ligand contact to substrate. The Proton acceptor; specific for L-alanine role is filled by tyrosine 254. Position 302 (methionine 302) interacts with substrate.

Belongs to the alanine racemase family. Pyridoxal 5'-phosphate is required as a cofactor.

The enzyme catalyses L-alanine = D-alanine. It participates in amino-acid biosynthesis; D-alanine biosynthesis; D-alanine from L-alanine: step 1/1. Catalyzes the interconversion of L-alanine and D-alanine. May also act on other amino acids. The chain is Alanine racemase (alr) from Actinobacillus succinogenes (strain ATCC 55618 / DSM 22257 / CCUG 43843 / 130Z).